A 616-amino-acid chain; its full sequence is Chaperone protein HscA (616 aa).

This sequence belongs to the heat shock protein 70 family.

In terms of biological role, chaperone involved in the maturation of iron-sulfur cluster-containing proteins. Has a low intrinsic ATPase activity which is markedly stimulated by HscB. Involved in the maturation of IscU. In Enterobacter sp. (strain 638), this protein is Chaperone protein HscA.